Consider the following 185-residue polypeptide: Ribosome-recycling factor (185 aa).

This sequence belongs to the RRF family.

The protein resides in the cytoplasm. Functionally, responsible for the release of ribosomes from messenger RNA at the termination of protein biosynthesis. May increase the efficiency of translation by recycling ribosomes from one round of translation to another. The chain is Ribosome-recycling factor from Vesicomyosocius okutanii subsp. Calyptogena okutanii (strain HA).